The following is a 205-amino-acid chain: High frequency lysogenization protein HflD homolog (205 aa).

Belongs to the HflD family.

It localises to the cytoplasm. The protein resides in the cell inner membrane. The polypeptide is High frequency lysogenization protein HflD homolog (Vibrio cholerae serotype O1 (strain ATCC 39541 / Classical Ogawa 395 / O395)).